The sequence spans 120 residues: UPF0231 protein KPK_4613 (120 aa).

This sequence belongs to the UPF0231 family.

The protein is UPF0231 protein KPK_4613 of Klebsiella pneumoniae (strain 342).